The chain runs to 255 residues: MMHDDPNEAGLPPDDAALPDEAADGADEVNPLHHRRIRSFVTRAGRVSTGQRRAIDELGPRFVVPYAPTLPDWDAVFGRSAPRILEIGFGMGASTAEIAAHRPGDDFLGVEVHEPGVGALLKLIGEQGLTNIRIIQHDAVEVLEHMLAPESLDGVHIFFPDPWHKARHHKRRLIQPPLVAQLAARLKPGAYLHCATDWQNYAEQMLEVLSAEPTLENTAADYAPRPDYRPVTKFERRGLRLGHGVWDLVFRKRAA.

A disordered region spans residues 1-30 (MMHDDPNEAGLPPDDAALPDEAADGADEVN). A compositionally biased stretch (acidic residues) spans 17 to 27 (ALPDEAADGAD). 4 residues coordinate S-adenosyl-L-methionine: Glu-86, Glu-111, Asp-138, and Asp-161. Asp-161 is a catalytic residue. Substrate-binding positions include Lys-165, Asp-197, and 232 to 235 (TKFE).

This sequence belongs to the class I-like SAM-binding methyltransferase superfamily. TrmB family.

It carries out the reaction guanosine(46) in tRNA + S-adenosyl-L-methionine = N(7)-methylguanosine(46) in tRNA + S-adenosyl-L-homocysteine. The protein operates within tRNA modification; N(7)-methylguanine-tRNA biosynthesis. Its function is as follows. Catalyzes the formation of N(7)-methylguanine at position 46 (m7G46) in tRNA. This Burkholderia vietnamiensis (strain G4 / LMG 22486) (Burkholderia cepacia (strain R1808)) protein is tRNA (guanine-N(7)-)-methyltransferase.